We begin with the raw amino-acid sequence, 483 residues long: MLTLDTLNTMLAVSEEGMVEEMILALLASPQLVIFFEKFPRLKNAVTADLPRWREALRSRLKDARVPPELTEEVMCYQQSQLLSTPQFIVQLPQILALLHRLHSPYAAQAKQLTESNSTFTPALHTLFLQRWRLSLVVQATTLNQQLLEEEREQLLSDVQERMTLSGQLEPTLAENDNAAGRLWDMSAGQLKRGDYQLIVKYGEFLAAQPELMQLAEQLGRSREAKSVPKKDAPMETFRTLVREPATVPEQVDGIQQGDDILRLLPPELATLGITELEYEFYRRLVEKQLLTYRLHGEAWREKVTERPVVHQDVDEQPRGPFIVCVDTSGSMGGFNEQCAKAFCLALMRVALADNRRCFIMLFSTDVVRYELSGPEGIEQAIRFLSQRFRGGTDIASCFRAIIERMQGREWFDADAVVISDFIAQRLPDDVVSKVGELQRLHQHRFHAVAMSAHGKPGIMRIFDHIWRFDTGMRSRLLRRWRR.

It belongs to the ViaA family. In terms of assembly, homodimer. Interacts with RavA.

The protein resides in the cytoplasm. Component of the RavA-ViaA chaperone complex, which may act on the membrane to optimize the function of some of the respiratory chains. ViaA stimulates the ATPase activity of RavA. This chain is Regulatory protein ViaA, found in Salmonella dublin (strain CT_02021853).